The sequence spans 473 residues: 3-isopropylmalate dehydratase large subunit (473 aa).

[4Fe-4S] cluster is bound by residues C354, C414, and C417.

This sequence belongs to the aconitase/IPM isomerase family. LeuC type 1 subfamily. In terms of assembly, heterodimer of LeuC and LeuD. [4Fe-4S] cluster serves as cofactor.

It carries out the reaction (2R,3S)-3-isopropylmalate = (2S)-2-isopropylmalate. It participates in amino-acid biosynthesis; L-leucine biosynthesis; L-leucine from 3-methyl-2-oxobutanoate: step 2/4. Catalyzes the isomerization between 2-isopropylmalate and 3-isopropylmalate, via the formation of 2-isopropylmaleate. This is 3-isopropylmalate dehydratase large subunit from Mycobacterium bovis (strain ATCC BAA-935 / AF2122/97).